The following is a 151-amino-acid chain: Methylglyoxal synthase (151 aa).

An MGS-like domain is found at 6–151 (RVMPAHKHIA…DYDAYLAERV (146 aa)). Residues His19, Lys23, 45 to 48 (TGTT), and 65 to 66 (SG) each bind substrate. Asp71 acts as the Proton donor/acceptor in catalysis. Substrate is bound at residue His98.

Belongs to the methylglyoxal synthase family.

The enzyme catalyses dihydroxyacetone phosphate = methylglyoxal + phosphate. In terms of biological role, catalyzes the formation of methylglyoxal from dihydroxyacetone phosphate. In Aliivibrio fischeri (strain ATCC 700601 / ES114) (Vibrio fischeri), this protein is Methylglyoxal synthase.